Reading from the N-terminus, the 676-residue chain is DNA ligase (676 aa).

NAD(+) contacts are provided by residues 41–45 (DLTYD), 90–91 (SL), and glutamate 123. The N6-AMP-lysine intermediate role is filled by lysine 125. NAD(+)-binding residues include arginine 146, glutamate 180, lysine 293, and lysine 317. Zn(2+) is bound by residues cysteine 408, cysteine 411, cysteine 424, and cysteine 429.

It belongs to the NAD-dependent DNA ligase family. LigA subfamily. Mg(2+) is required as a cofactor. It depends on Mn(2+) as a cofactor.

It catalyses the reaction NAD(+) + (deoxyribonucleotide)n-3'-hydroxyl + 5'-phospho-(deoxyribonucleotide)m = (deoxyribonucleotide)n+m + AMP + beta-nicotinamide D-nucleotide.. In terms of biological role, DNA ligase that catalyzes the formation of phosphodiester linkages between 5'-phosphoryl and 3'-hydroxyl groups in double-stranded DNA using NAD as a coenzyme and as the energy source for the reaction. It is essential for DNA replication and repair of damaged DNA. This Borrelia turicatae (strain 91E135) protein is DNA ligase.